The chain runs to 837 residues: Tuftelin-interacting protein 11 (837 aa).

Basic and acidic residues-rich tracts occupy residues 1–13 and 44–64; these read MSLSHLYRDGEGH and QTKEEATYGVWAERDSDEERP. 3 disordered regions span residues 1–21, 34–73, and 85–135; these read MSLSHLYRDGEGHLDDDDDER, EFNPNRQRHWQTKEEATYGVWAERDSDEERPSFGGKRARD, and LKKG…FAGG. Residues 1–50 are required for interaction with DHX15; the sequence is MSLSHLYRDGEGHLDDDDDERENFEITDWDLQNEFNPNRQRHWQTKEEAT. Serine 2, serine 59, serine 95, and serine 98 each carry phosphoserine. Positions 91–100 are enriched in acidic residues; sequence EEADSEDSDA. Over residues 101 to 116 the composition is skewed to basic and acidic residues; sequence EEKPVKQEDFPKDLGP. Serine 144 carries the post-translational modification Phosphoserine. One can recognise a G-patch domain in the interval 149 to 195; the sequence is TKGIGQKLLQKMGYVPGRGLGKNAQGIINPIEAKQRKGKGAVGAYGS. The interval 183–236 is disordered; the sequence is QRKGKGAVGAYGSERTTQSLQDFPVADSEEEAEEEFQKELSQWRKDPSGSKKKP. Position 210 is a phosphoserine (serine 210). Residues 217–231 show a composition bias toward basic and acidic residues; it reads EFQKELSQWRKDPSG. A Nuclear localization signal motif is present at residues 700–705; sequence VKDKFN. The tract at residues 710-734 is required for nuclear speckle localization; sequence IMNRAVSSNVGAYMQPGARENIAYL.

The protein belongs to the TFP11/STIP family. In terms of assembly, identified in the spliceosome C complex. Found in the Intron Large (IL) complex, a post-mRNA release spliceosomal complex containing the excised intron, U2, U5 and U6 snRNPs, and splicing factors. Interacts with TUFT1. Interacts with DHX15; indicative for a recruitment of DHX15 to the IL complex. Interacts with GCFC2.

It localises to the cytoplasm. Its subcellular location is the nucleus. Involved in pre-mRNA splicing, specifically in spliceosome disassembly during late-stage splicing events. Intron turnover seems to proceed through reactions in two lariat-intron associated complexes termed Intron Large (IL) and Intron Small (IS). In cooperation with DHX15 seems to mediate the transition of the U2, U5 and U6 snRNP-containing IL complex to the snRNP-free IS complex leading to efficient debranching and turnover of excised introns. May play a role in the differentiation of ameloblasts and odontoblasts or in the forming of the enamel extracellular matrix. The protein is Tuftelin-interacting protein 11 (Tfip11) of Rattus norvegicus (Rat).